The chain runs to 131 residues: UPF0102 protein YraN (131 aa).

The span at 1 to 19 (MATVPTRSGSPRQLTTKQT) shows a compositional bias: polar residues. The interval 1 to 20 (MATVPTRSGSPRQLTTKQTG) is disordered.

It belongs to the UPF0102 family.

The chain is UPF0102 protein YraN from Shigella boydii serotype 18 (strain CDC 3083-94 / BS512).